Consider the following 372-residue polypeptide: Alanine racemase (372 aa).

K35 (proton acceptor; specific for D-alanine) is an active-site residue. K35 is subject to N6-(pyridoxal phosphate)lysine. A substrate-binding site is contributed by R143. Y268 serves as the catalytic Proton acceptor; specific for L-alanine. M316 is a binding site for substrate.

This sequence belongs to the alanine racemase family. Requires pyridoxal 5'-phosphate as cofactor.

It catalyses the reaction L-alanine = D-alanine. It participates in amino-acid biosynthesis; D-alanine biosynthesis; D-alanine from L-alanine: step 1/1. Its function is as follows. Catalyzes the interconversion of L-alanine and D-alanine. May also act on other amino acids. This Shewanella frigidimarina (strain NCIMB 400) protein is Alanine racemase (alr).